Reading from the N-terminus, the 314-residue chain is Methionyl-tRNA formyltransferase (314 aa).

112–115 provides a ligand contact to (6S)-5,6,7,8-tetrahydrofolate; sequence SLLP.

This sequence belongs to the Fmt family.

It carries out the reaction L-methionyl-tRNA(fMet) + (6R)-10-formyltetrahydrofolate = N-formyl-L-methionyl-tRNA(fMet) + (6S)-5,6,7,8-tetrahydrofolate + H(+). Its function is as follows. Attaches a formyl group to the free amino group of methionyl-tRNA(fMet). The formyl group appears to play a dual role in the initiator identity of N-formylmethionyl-tRNA by promoting its recognition by IF2 and preventing the misappropriation of this tRNA by the elongation apparatus. This Aeromonas salmonicida (strain A449) protein is Methionyl-tRNA formyltransferase.